A 264-amino-acid chain; its full sequence is ATP synthase subunit a (264 aa).

A run of 6 helical transmembrane segments spans residues 29-49 (TWHI…LWLF), 89-109 (VIAP…FMDM), 134-154 (DLNI…YYSI), 177-197 (IPVN…SLAL), 208-228 (LIFI…TLGV), and 235-255 (LIFH…LTIV).

The protein belongs to the ATPase A chain family. As to quaternary structure, F-type ATPases have 2 components, CF(1) - the catalytic core - and CF(0) - the membrane proton channel. CF(1) has five subunits: alpha(3), beta(3), gamma(1), delta(1), epsilon(1). CF(0) has three main subunits: a(1), b(2) and c(9-12). The alpha and beta chains form an alternating ring which encloses part of the gamma chain. CF(1) is attached to CF(0) by a central stalk formed by the gamma and epsilon chains, while a peripheral stalk is formed by the delta and b chains.

The protein localises to the cell inner membrane. Its function is as follows. Key component of the proton channel; it plays a direct role in the translocation of protons across the membrane. The sequence is that of ATP synthase subunit a from Shewanella woodyi (strain ATCC 51908 / MS32).